The sequence spans 233 residues: Cell number regulator 8 (233 aa).

Transmembrane regions (helical) follow at residues 85–101 and 115–138; these read VCLL…GSNV and CLPY…APWF.

This sequence belongs to the cornifelin family. In terms of tissue distribution, expressed in roots, coleoptiles, leaves, stalks, apical meristems, immature ears, embryos, endosperm, pericarp, silks, tassel spikelets and pollen. Highest expression in the pericarp and stalks.

It is found in the membrane. The protein is Cell number regulator 8 (CNR8) of Zea mays (Maize).